Here is a 312-residue protein sequence, read N- to C-terminus: Ribosomal protein L11 methyltransferase (312 aa).

4 residues coordinate S-adenosyl-L-methionine: threonine 162, glycine 183, aspartate 205, and asparagine 248.

Belongs to the methyltransferase superfamily. PrmA family.

It localises to the cytoplasm. The catalysed reaction is L-lysyl-[protein] + 3 S-adenosyl-L-methionine = N(6),N(6),N(6)-trimethyl-L-lysyl-[protein] + 3 S-adenosyl-L-homocysteine + 3 H(+). In terms of biological role, methylates ribosomal protein L11. The sequence is that of Ribosomal protein L11 methyltransferase from Anoxybacillus flavithermus (strain DSM 21510 / WK1).